Reading from the N-terminus, the 359-residue chain is Probable dual-specificity RNA methyltransferase RlmN (359 aa).

The active-site Proton acceptor is the E91. The Radical SAM core domain maps to 97 to 335 (QHYGHSVCVT…CVVRQEHGTD (239 aa)). A disulfide bond links C104 and C340. [4Fe-4S] cluster contacts are provided by C111, C115, and C118. S-adenosyl-L-methionine contacts are provided by residues 163–164 (GE), S195, 218–220 (SLH), and N296. The active-site S-methylcysteine intermediate is C340.

It belongs to the radical SAM superfamily. RlmN family. Requires [4Fe-4S] cluster as cofactor.

Its subcellular location is the cytoplasm. It carries out the reaction adenosine(2503) in 23S rRNA + 2 reduced [2Fe-2S]-[ferredoxin] + 2 S-adenosyl-L-methionine = 2-methyladenosine(2503) in 23S rRNA + 5'-deoxyadenosine + L-methionine + 2 oxidized [2Fe-2S]-[ferredoxin] + S-adenosyl-L-homocysteine. The catalysed reaction is adenosine(37) in tRNA + 2 reduced [2Fe-2S]-[ferredoxin] + 2 S-adenosyl-L-methionine = 2-methyladenosine(37) in tRNA + 5'-deoxyadenosine + L-methionine + 2 oxidized [2Fe-2S]-[ferredoxin] + S-adenosyl-L-homocysteine. Functionally, specifically methylates position 2 of adenine 2503 in 23S rRNA and position 2 of adenine 37 in tRNAs. The sequence is that of Probable dual-specificity RNA methyltransferase RlmN from Streptococcus pyogenes serotype M12 (strain MGAS2096).